The sequence spans 327 residues: Porphobilinogen deaminase (327 aa).

The residue at position 250 (cysteine 250) is an S-(dipyrrolylmethanemethyl)cysteine.

The protein belongs to the HMBS family. In terms of assembly, monomer. The cofactor is dipyrromethane.

The enzyme catalyses 4 porphobilinogen + H2O = hydroxymethylbilane + 4 NH4(+). The protein operates within porphyrin-containing compound metabolism; protoporphyrin-IX biosynthesis; coproporphyrinogen-III from 5-aminolevulinate: step 2/4. Its function is as follows. Tetrapolymerization of the monopyrrole PBG into the hydroxymethylbilane pre-uroporphyrinogen in several discrete steps. This is Porphobilinogen deaminase from Paraburkholderia phymatum (strain DSM 17167 / CIP 108236 / LMG 21445 / STM815) (Burkholderia phymatum).